The following is a 156-amino-acid chain: Single-stranded DNA-binding protein 1 (156 aa).

The region spanning 1–104 (MLNRTILVGR…VVADSIQFLE (104 aa)) is the SSB domain. Residues 122-146 (QTRGQSQYSNNKPVKDNPFANANCP) form a disordered region.

As to quaternary structure, homotetramer.

This Staphylococcus aureus (strain MSSA476) protein is Single-stranded DNA-binding protein 1 (ssb1).